The chain runs to 487 residues: Serralysin (487 aa).

Residues 1-16 (MQSTKKAIEITESNFA) constitute a propeptide that is removed on maturation. His192 provides a ligand contact to Zn(2+). Residue Glu193 is part of the active site. The Zn(2+) site is built by His196, His202, and Tyr232. Ca(2+)-binding residues include Arg269, Gly271, Thr273, Asp301, Gly303, Gly304, Asp306, Thr343, Glu345, Gly350, Gly352, Asp354, Asn359, Ala361, Asn363, Gly367, Gly368, Ala369, Asp372, Gly376, Gly377, Gly378, Gly379, Asp381, Gly385, Gly386, Ala387, Gly388, Asp390, Asp399, Asp406, and Asp416. Hemolysin-type calcium-binding repeat units lie at residues 348-365 (IGGS…NNVL) and 366-383 (KGGA…ADEL).

This sequence belongs to the peptidase M10B family. Requires Ca(2+) as cofactor. Zn(2+) is required as a cofactor.

It localises to the secreted. It carries out the reaction Preferential cleavage of bonds with hydrophobic residues in P1'.. Functionally, naturally present in the silkworm intestine and allows the emerging moth to dissolve its cocoon. The polypeptide is Serralysin (Serratia marcescens (strain ATCC 21074 / E-15)).